We begin with the raw amino-acid sequence, 685 residues long: Methionine--tRNA ligase (685 aa).

A 'HIGH' region motif is present at residues 12 to 22 (PYANGSIHLGH). Residues Cys-143, Cys-146, Cys-156, and Cys-159 each contribute to the Zn(2+) site. The 'KMSKS' region motif lies at 339–343 (KMSKS). Lys-342 contributes to the ATP binding site. One can recognise a tRNA-binding domain in the interval 582–685 (DFMKIDMRVA…AGAQPGDKVG (104 aa)).

It belongs to the class-I aminoacyl-tRNA synthetase family. MetG type 1 subfamily. Homodimer. Zn(2+) is required as a cofactor.

The protein localises to the cytoplasm. It carries out the reaction tRNA(Met) + L-methionine + ATP = L-methionyl-tRNA(Met) + AMP + diphosphate. Its function is as follows. Is required not only for elongation of protein synthesis but also for the initiation of all mRNA translation through initiator tRNA(fMet) aminoacylation. This chain is Methionine--tRNA ligase, found in Neisseria meningitidis serogroup C (strain 053442).